We begin with the raw amino-acid sequence, 163 residues long: Ribonuclease P protein component 4 (163 aa).

Residues Cys-66, Cys-69, Cys-96, and Cys-99 each contribute to the Zn(2+) site. Residues 110–163 (GPRGGAPISPPAAEYGSGGRDSGEREDKGPQGPPRQGGRDNRQGGGHQGGPKGD) are disordered. Over residues 152-163 (QGGGHQGGPKGD) the composition is skewed to gly residues.

Belongs to the eukaryotic/archaeal RNase P protein component 4 family. In terms of assembly, consists of a catalytic RNA component and at least 4-5 protein subunits. Requires Zn(2+) as cofactor.

It localises to the cytoplasm. It catalyses the reaction Endonucleolytic cleavage of RNA, removing 5'-extranucleotides from tRNA precursor.. Functionally, part of ribonuclease P, a protein complex that generates mature tRNA molecules by cleaving their 5'-ends. This chain is Ribonuclease P protein component 4, found in Aeropyrum pernix (strain ATCC 700893 / DSM 11879 / JCM 9820 / NBRC 100138 / K1).